We begin with the raw amino-acid sequence, 302 residues long: Nucleotide-binding protein RHOS4_02640 (302 aa).

15-22 serves as a coordination point for ATP; the sequence is GPSGAGRT. 62-65 lines the GTP pocket; it reads DVRN.

This sequence belongs to the RapZ-like family.

In terms of biological role, displays ATPase and GTPase activities. This chain is Nucleotide-binding protein RHOS4_02640, found in Cereibacter sphaeroides (strain ATCC 17023 / DSM 158 / JCM 6121 / CCUG 31486 / LMG 2827 / NBRC 12203 / NCIMB 8253 / ATH 2.4.1.) (Rhodobacter sphaeroides).